A 340-amino-acid polypeptide reads, in one-letter code: MKESINILAIESSCDETSAAVVINGREVLSNIIASQISTHEKFGGVVPEVASRKHIEVISAVVQEALDEANFTLDDIDAIGVTYGPGLVGALLVGLQYAKGLAFATGKPLIGVNHIEGHISANFIEYKDLKPPFMCLVVSGGHTFIVYMKDYGEFEVLGETRDDAAGEAFDKVARAIGLGYPGGPKIDKISKEGNEEAIKFPRANFHDDTLDFSFSGIKSAVLNYLNKKEMKGEEINRADVAASFQKSVVDVLVDNTIKACMSKKVDKIAVAGGVAANSCLRETLVRECKKKGIEVLIPPFILCTDNAAMIGSAAYFEYIKGRRTSLDINAVPNLKLGER.

Residues His115 and His119 each contribute to the Fe cation site. Substrate-binding positions include 138-142, Asp171, Gly184, Asp188, and Asn278; that span reads VVSGG. Fe cation is bound at residue Asp306.

This sequence belongs to the KAE1 / TsaD family. The cofactor is Fe(2+).

Its subcellular location is the cytoplasm. The enzyme catalyses L-threonylcarbamoyladenylate + adenosine(37) in tRNA = N(6)-L-threonylcarbamoyladenosine(37) in tRNA + AMP + H(+). Its function is as follows. Required for the formation of a threonylcarbamoyl group on adenosine at position 37 (t(6)A37) in tRNAs that read codons beginning with adenine. Is involved in the transfer of the threonylcarbamoyl moiety of threonylcarbamoyl-AMP (TC-AMP) to the N6 group of A37, together with TsaE and TsaB. TsaD likely plays a direct catalytic role in this reaction. This chain is tRNA N6-adenosine threonylcarbamoyltransferase, found in Clostridium botulinum (strain 657 / Type Ba4).